Here is a 192-residue protein sequence, read N- to C-terminus: GTP cyclohydrolase-2 (192 aa).

50–54 (RLHSE) contributes to the GTP binding site. Zn(2+)-binding residues include Cys55, Cys66, and Cys68. Residues 92–94 (EGR) and Thr114 contribute to the GTP site. Asp126 acts as the Proton acceptor in catalysis. Arg128 acts as the Nucleophile in catalysis. GTP is bound by residues Thr149 and Lys154.

Belongs to the GTP cyclohydrolase II family. Requires Zn(2+) as cofactor.

It catalyses the reaction GTP + 4 H2O = 2,5-diamino-6-hydroxy-4-(5-phosphoribosylamino)-pyrimidine + formate + 2 phosphate + 3 H(+). It functions in the pathway cofactor biosynthesis; riboflavin biosynthesis; 5-amino-6-(D-ribitylamino)uracil from GTP: step 1/4. Functionally, catalyzes the conversion of GTP to 2,5-diamino-6-ribosylamino-4(3H)-pyrimidinone 5'-phosphate (DARP), formate and pyrophosphate. This chain is GTP cyclohydrolase-2, found in Helicobacter pylori (strain J99 / ATCC 700824) (Campylobacter pylori J99).